The chain runs to 227 residues: Phosphoribosylformylglycinamidine synthase subunit PurQ (227 aa).

The Glutamine amidotransferase type-1 domain occupies 3-225; it reads FAVIVFPGSN…LKQWRETYVV (223 aa). Residue cysteine 86 is the Nucleophile of the active site. Residues histidine 194 and glutamate 196 contribute to the active site.

As to quaternary structure, part of the FGAM synthase complex composed of 1 PurL, 1 PurQ and 2 PurS subunits.

The protein resides in the cytoplasm. The enzyme catalyses N(2)-formyl-N(1)-(5-phospho-beta-D-ribosyl)glycinamide + L-glutamine + ATP + H2O = 2-formamido-N(1)-(5-O-phospho-beta-D-ribosyl)acetamidine + L-glutamate + ADP + phosphate + H(+). The catalysed reaction is L-glutamine + H2O = L-glutamate + NH4(+). The protein operates within purine metabolism; IMP biosynthesis via de novo pathway; 5-amino-1-(5-phospho-D-ribosyl)imidazole from N(2)-formyl-N(1)-(5-phospho-D-ribosyl)glycinamide: step 1/2. Functionally, part of the phosphoribosylformylglycinamidine synthase complex involved in the purines biosynthetic pathway. Catalyzes the ATP-dependent conversion of formylglycinamide ribonucleotide (FGAR) and glutamine to yield formylglycinamidine ribonucleotide (FGAM) and glutamate. The FGAM synthase complex is composed of three subunits. PurQ produces an ammonia molecule by converting glutamine to glutamate. PurL transfers the ammonia molecule to FGAR to form FGAM in an ATP-dependent manner. PurS interacts with PurQ and PurL and is thought to assist in the transfer of the ammonia molecule from PurQ to PurL. The polypeptide is Phosphoribosylformylglycinamidine synthase subunit PurQ (Bacillus cereus (strain 03BB102)).